The following is a 98-amino-acid chain: NADH-ubiquinone oxidoreductase chain 4L (98 aa).

3 consecutive transmembrane segments (helical) span residues 1–21 (MSITTLNIMVAFTMALLGMFT), 29–49 (SLLCLEGMMLSLFMLATIVSL), and 61–81 (VILLVFAACEAAVGLALLVMV).

This sequence belongs to the complex I subunit 4L family. Core subunit of respiratory chain NADH dehydrogenase (Complex I) which is composed of 45 different subunits.

It localises to the mitochondrion inner membrane. It carries out the reaction a ubiquinone + NADH + 5 H(+)(in) = a ubiquinol + NAD(+) + 4 H(+)(out). Functionally, core subunit of the mitochondrial membrane respiratory chain NADH dehydrogenase (Complex I) which catalyzes electron transfer from NADH through the respiratory chain, using ubiquinone as an electron acceptor. Part of the enzyme membrane arm which is embedded in the lipid bilayer and involved in proton translocation. This chain is NADH-ubiquinone oxidoreductase chain 4L (MT-ND4L), found in Ochotona collaris (Collared pika).